The following is a 313-amino-acid chain: Sideroflexin-4 (313 aa).

Helical transmembrane passes span 87–107, 141–161, 175–191, 230–247, and 269–289; these read AALLPFTAPTLFLSMLPVKSL, LLLGAGVIVSSTFLGLFPRLL, FIPVIILAQLSGMNVIA, VVLFGTSAFIPEVFAYFF, and VLVMGLMVPVSFSVFPQIGRI.

The protein belongs to the sideroflexin family.

It localises to the mitochondrion inner membrane. In terms of biological role, mitochondrial amino-acid transporter. Does not act as a serine transporter: not able to mediate transport of serine into mitochondria. This chain is Sideroflexin-4, found in Bos taurus (Bovine).